Consider the following 208-residue polypeptide: MPMHPMEKRLHQALFLQSAQRLDQCPPDEGREVAFAGRSNAGKSSAINRLTGQRSLARTSKTPGRTQLLNFFQLDEERRLVDLPGYGYAKVSKSKRNEWQEHLDHYLSERQALVGLVLMMDIRHPLKDFDLMMLEWSAQANMPIHILMTKADKLKFGAAKSTLLQVQKQLKEHPAPLSLQLFSATNGTGCDEAWDKLGEWLGIERLTP.

Positions 29–203 constitute an EngB-type G domain; it reads EGREVAFAGR…WDKLGEWLGI (175 aa). GTP contacts are provided by residues 37 to 44, 64 to 68, 82 to 85, 149 to 152, and 182 to 184; these read GRSNAGKS, GRTQL, DLPG, TKAD, and FSA. Mg(2+) contacts are provided by Ser44 and Thr66.

This sequence belongs to the TRAFAC class TrmE-Era-EngA-EngB-Septin-like GTPase superfamily. EngB GTPase family. Mg(2+) serves as cofactor.

Its function is as follows. Necessary for normal cell division and for the maintenance of normal septation. The chain is Probable GTP-binding protein EngB from Alcanivorax borkumensis (strain ATCC 700651 / DSM 11573 / NCIMB 13689 / SK2).